The following is a 252-amino-acid chain: MSNHSNAAAVRAFRILEILSAADGPLSLAAIVQAIELPKQTVHRILKQLESTWLVSRTAGNRHYECSSRVRQLAVNVLMQAGPAAARHAILQQLVDKIGETCNLTMLSGDDVVYLDRVETQWPLRMHLQPGSRVPLHCTASGKLLLAFLPSAQRQRLVASLPLRAHSAHTITNAEALHAELAETRQRRLGVNNQENLEGMIAVAVPVMRNRSRACAAIAVQVPMARMTMDQLMGFVPDLRLAADEMVKTFCE.

The 63-residue stretch at 6–68 folds into the HTH iclR-type domain; that stretch reads NAAAVRAFRI…AGNRHYECSS (63 aa). Positions 28 to 47 form a DNA-binding region, H-T-H motif; that stretch reads LAAIVQAIELPKQTVHRILK. Residues 83–252 enclose the IclR-ED domain; that stretch reads PAAARHAILQ…ADEMVKTFCE (170 aa).

Its function is as follows. May regulate transcription of the sauSTU operon. This chain is Probable transcriptional regulator SauR (sauR), found in Cupriavidus necator (strain ATCC 17699 / DSM 428 / KCTC 22496 / NCIMB 10442 / H16 / Stanier 337) (Ralstonia eutropha).